Consider the following 539-residue polypeptide: MKTIGEFNAAHGPEAIGLTDLTAVHWNLEAPRLYEEALRRGEAQLARGGALVATTGSHTGRSPKDKVVVRDAGTENEIWWDNNGSITREQFATLLEDFRAHARGKELFAQDLYGGADPAHRVRARVYTELAWHSLFIRNLLIRPERGELAAYVPELTIIDLPSFQADPVRHGCRSKTVIAIDFAQKIVLIGGSAYAGEMKKSVFTYLNYVLPGAGVMPMHCSANAALDETGDSALFFGLSGTGKTTLSNDSSRKLIGDDEHGWSRDGIFNFEGGCYAKTIRLSRNAEPEIYATTERFGTVMENVVIDPLTRVPDFDDATLTENTRCAYPLDFIANASATGRAGHPKNIVMLTCDAFGVMPPIARLTGAEAMYHFLSGYTAKVAGTERGLTAPEATFSTCFGAPFMPRHPSVYGNLLRALMAEHGVDCWLVNTGWTGGGVGTGRRMPIRVTRRLLSAALDGSLAQTEFRRDPYFGFSVPVEVAGVETQVLSPVETWTNKAAFAETATRLVTMFRENFKRFESHVDADVRAAEPVAAPIAA.

Residues Arg-61, Tyr-195, and Lys-201 each contribute to the substrate site. Residues Lys-201, His-220, and 238 to 246 each bind ATP; that span reads GLSGTGKTT. Mn(2+) contacts are provided by Lys-201 and His-220. Asp-259 provides a ligand contact to Mn(2+). Glu-287, Arg-325, and Thr-450 together coordinate ATP. Arg-325 is a substrate binding site.

Belongs to the phosphoenolpyruvate carboxykinase (ATP) family. It depends on Mn(2+) as a cofactor.

It is found in the cytoplasm. It catalyses the reaction oxaloacetate + ATP = phosphoenolpyruvate + ADP + CO2. It participates in carbohydrate biosynthesis; gluconeogenesis. In terms of biological role, involved in the gluconeogenesis. Catalyzes the conversion of oxaloacetate (OAA) to phosphoenolpyruvate (PEP) through direct phosphoryl transfer between the nucleoside triphosphate and OAA. In Methylorubrum populi (strain ATCC BAA-705 / NCIMB 13946 / BJ001) (Methylobacterium populi), this protein is Phosphoenolpyruvate carboxykinase (ATP).